Reading from the N-terminus, the 508-residue chain is Aspartic proteinase A3 (508 aa).

An N-terminal signal peptide occupies residues 1–25 (MGTRFQSFLLVFLLSCLILISTASC). Positions 26–69 (ERNGDGTIRIGLKKRKLDRSNRLASQLFLKNRGSHWSPKHYFRL) are cleaved as a propeptide — activation peptide. Residues 87–505 (YYGDITIGTP…DYGKGRVGFA (419 aa)) enclose the Peptidase A1 domain. Asp105 is a catalytic residue. 2 cysteine pairs are disulfide-bonded: Cys118–Cys124 and Cys283–Cys287. Asp292 is an active-site residue. One can recognise a Saposin B-type domain in the interval 317–419 (IVSRECKAVV…AELCDHIPTQ (103 aa)). Cystine bridges form between Cys322–Cys413, Cys347–Cys385, Cys353–Cys382, and Cys427–Cys464. Asn399 is a glycosylation site (N-linked (GlcNAc...) asparagine).

The protein belongs to the peptidase A1 family. As to expression, expressed in petals, carpels and seed pods.

Its subcellular location is the secreted. Functionally, involved in the processing and degradation of storage proteins. In Arabidopsis thaliana (Mouse-ear cress), this protein is Aspartic proteinase A3 (APA3).